The sequence spans 450 residues: MAHITFDTKNIENFVADHELDEMQPLIKMADEQLRNRSGAGAEYSDWITLPTDYDKDEFARIQTAAQKIQSDSKVLVVIGIGGSYLGAKMAVDFLNPMFNNELADNQRQGVKIYFAGNSTSASYINDLVRVIGDQDFSVNVISKSGTTTEPSIAFRVFKQLLEKKYGAEAAKQRIYATTDANRGALHDEAKISGYETFTIPDGVGGRFSVLTAVGLLPIAASGADIEALMTGARDAQEEYSDSDIKNNEAYKYAAVRRILYDKGYTTELLINWEPTMQYLSEWWKQLMGESEGKNQKGIYPSSANFSTDLHSLGQYIQEGRRDLFETVVKLDNPVSNIDLPHEDGNNDGLQYLEGVTIDEVNTKASQGVTLAHVDGGVPNLAVHLPAQDAYSLGYLIYFFEIAVGASGYTFGINPFNQPGVEAYKTAMFALLGKPGYEEQTKVYRARLGK.

Glutamate 290 functions as the Proton donor in the catalytic mechanism. Catalysis depends on residues histidine 311 and lysine 425.

Belongs to the GPI family.

Its subcellular location is the cytoplasm. The catalysed reaction is alpha-D-glucose 6-phosphate = beta-D-fructose 6-phosphate. Its pathway is carbohydrate biosynthesis; gluconeogenesis. It functions in the pathway carbohydrate degradation; glycolysis; D-glyceraldehyde 3-phosphate and glycerone phosphate from D-glucose: step 2/4. Catalyzes the reversible isomerization of glucose-6-phosphate to fructose-6-phosphate. This is Glucose-6-phosphate isomerase from Leuconostoc mesenteroides subsp. mesenteroides (strain ATCC 8293 / DSM 20343 / BCRC 11652 / CCM 1803 / JCM 6124 / NCDO 523 / NBRC 100496 / NCIMB 8023 / NCTC 12954 / NRRL B-1118 / 37Y).